A 271-amino-acid chain; its full sequence is Cyanophycinase (271 aa).

Active-site charge relay system residues include Ser-132, His-174, and Glu-201.

The protein belongs to the peptidase S51 family. Homodimer.

It catalyses the reaction [L-4-(L-arginin-2-N-yl)aspartate](n) + H2O = [L-4-(L-arginin-2-N-yl)aspartate](n-1) + L-4-(L-arginin-2-N-yl)aspartate. In terms of biological role, exopeptidase that catalyzes the hydrolytic cleavage of multi-L-arginyl-poly-L-aspartic acid (cyanophycin; a water-insoluble reserve polymer) into aspartate-arginine dipeptides. This is Cyanophycinase (cphB) from Synechocystis sp. (strain ATCC 27184 / PCC 6803 / Kazusa).